We begin with the raw amino-acid sequence, 296 residues long: Cytidine deaminase (296 aa).

2 consecutive CMP/dCMP-type deaminase domains span residues 47–167 (AESE…FGPS) and 186–296 (DSSD…LDPE). Substrate is bound at residue 88 to 90 (NME). His-101 is a Zn(2+) binding site. The Proton donor role is filled by Glu-103. The Zn(2+) site is built by Cys-128 and Cys-131.

Belongs to the cytidine and deoxycytidylate deaminase family. In terms of assembly, homodimer. It depends on Zn(2+) as a cofactor.

The enzyme catalyses cytidine + H2O + H(+) = uridine + NH4(+). The catalysed reaction is 2'-deoxycytidine + H2O + H(+) = 2'-deoxyuridine + NH4(+). In terms of biological role, this enzyme scavenges exogenous and endogenous cytidine and 2'-deoxycytidine for UMP synthesis. The polypeptide is Cytidine deaminase (Shewanella sediminis (strain HAW-EB3)).